The chain runs to 219 residues: Endonuclease III (219 aa).

Positions 109–128 (RDELVKLPGVGRKTANVVVS) constitute a HhH domain. Cys189, Cys196, Cys199, and Cys205 together coordinate [4Fe-4S] cluster.

This sequence belongs to the Nth/MutY family. [4Fe-4S] cluster serves as cofactor.

It carries out the reaction 2'-deoxyribonucleotide-(2'-deoxyribose 5'-phosphate)-2'-deoxyribonucleotide-DNA = a 3'-end 2'-deoxyribonucleotide-(2,3-dehydro-2,3-deoxyribose 5'-phosphate)-DNA + a 5'-end 5'-phospho-2'-deoxyribonucleoside-DNA + H(+). DNA repair enzyme that has both DNA N-glycosylase activity and AP-lyase activity. The DNA N-glycosylase activity releases various damaged pyrimidines from DNA by cleaving the N-glycosidic bond, leaving an AP (apurinic/apyrimidinic) site. The AP-lyase activity cleaves the phosphodiester bond 3' to the AP site by a beta-elimination, leaving a 3'-terminal unsaturated sugar and a product with a terminal 5'-phosphate. The polypeptide is Endonuclease III (Bacillus subtilis (strain 168)).